The sequence spans 138 residues: Small ribosomal subunit protein uS9 (138 aa).

A disordered region spans residues 99 to 138 (DPDNRPPLKTEGYLTRDPRAKERKKYGLHKARKAPQYSKR). Residues 100 to 118 (PDNRPPLKTEGYLTRDPRA) are compositionally biased toward basic and acidic residues. A compositionally biased stretch (basic residues) spans 119–138 (KERKKYGLHKARKAPQYSKR).

It belongs to the universal ribosomal protein uS9 family.

The protein is Small ribosomal subunit protein uS9 of Nostoc punctiforme (strain ATCC 29133 / PCC 73102).